The chain runs to 324 residues: Taste receptor type 2 member 116 (324 aa).

The Extracellular portion of the chain corresponds to 1–2 (MN). A helical membrane pass occupies residues 3–23 (GVLYITFTVILSVEVIIGNFG). Topologically, residues 24-55 (NGIIALVNIMDLAKRRKISSVDQILTALAISR) are cytoplasmic. A helical transmembrane segment spans residues 56 to 76 (IVLLWLVLVSWWLSMFYPGQW). Over 77–94 (MTEGIDVIVHNVWTTLNQ) the chain is Extracellular. A helical membrane pass occupies residues 95-115 (ISLWLATSFSVFCFLKVANFS). The Cytoplasmic segment spans residues 116–128 (NTIFFYLKIRVKK). The helical transmembrane segment at 129 to 149 (VMTGTLIMFLLLLGLNIIVIN) threads the bilayer. Residues 150-183 (ASKTILIPEYKVNMSNSLNLKNTQISMLFPFANT) are Extracellular-facing. The N-linked (GlcNAc...) asparagine glycan is linked to N162. Residues 184 to 204 (LFGFIPFAVSLVTFLLLFFSL) form a helical membrane-spanning segment. Residues 205–236 (WKHQRKMHHGAQGCRDSSTKAHIRVLQTLIAS) are Cytoplasmic-facing. The chain crosses the membrane as a helical span at residues 237-257 (ILLYFVFFLSLVVKVWISLFL). Residues 258 to 261 (ERML) are Extracellular-facing. The chain crosses the membrane as a helical span at residues 262-282 (LLLITQAAKIAFPSLHPWVLI). Residues 283-324 (LGNAKLRKASLSALQWLRCRHKDEHRRVQRPEVHSCGSSCMP) are Cytoplasmic-facing.

It belongs to the G-protein coupled receptor T2R family.

It is found in the membrane. Putative taste receptor which may play a role in the perception of bitterness. The protein is Taste receptor type 2 member 116 of Rattus norvegicus (Rat).